Reading from the N-terminus, the 175-residue chain is Methylmalonyl-CoA epimerase, mitochondrial (175 aa).

The transit peptide at 1–35 directs the protein to the mitochondrion; it reads MARVLKVAAASAAGLFPRLRTPVSTVRTSASLSSH. Residues 46-175 form the VOC domain; it reads RLNHVAVAVP…GGVLVELEQA (130 aa). His-49 contributes to the Co(2+) binding site. Lys-113 is modified (N6-succinyllysine). His-121 is a Co(2+) binding site. Lys-149 is modified (N6-acetyllysine; alternate). Lys-149 bears the N6-succinyllysine; alternate mark. Glu-171 is a Co(2+) binding site.

This sequence belongs to the methylmalonyl-CoA epimerase family.

The protein localises to the mitochondrion. The catalysed reaction is (R)-methylmalonyl-CoA = (S)-methylmalonyl-CoA. In terms of biological role, methylmalonyl-CoA epimerase involved in propionyl-CoA metabolism. The chain is Methylmalonyl-CoA epimerase, mitochondrial (MCEE) from Bos taurus (Bovine).